Consider the following 434-residue polypeptide: Enolase (434 aa).

Q167 serves as a coordination point for (2R)-2-phosphoglycerate. The Proton donor role is filled by E209. The Mg(2+) site is built by D246, E291, and D318. Residues K343, R372, S373, and K394 each contribute to the (2R)-2-phosphoglycerate site. The Proton acceptor role is filled by K343.

This sequence belongs to the enolase family. In terms of assembly, component of the RNA degradosome, a multiprotein complex involved in RNA processing and mRNA degradation. It depends on Mg(2+) as a cofactor.

Its subcellular location is the cytoplasm. It is found in the secreted. It localises to the cell surface. The enzyme catalyses (2R)-2-phosphoglycerate = phosphoenolpyruvate + H2O. Its pathway is carbohydrate degradation; glycolysis; pyruvate from D-glyceraldehyde 3-phosphate: step 4/5. In terms of biological role, catalyzes the reversible conversion of 2-phosphoglycerate (2-PG) into phosphoenolpyruvate (PEP). It is essential for the degradation of carbohydrates via glycolysis. This is Enolase from Buchnera aphidicola subsp. Acyrthosiphon pisum (strain APS) (Acyrthosiphon pisum symbiotic bacterium).